A 326-amino-acid polypeptide reads, in one-letter code: GTP 3',8-cyclase (326 aa).

The region spanning 7 to 240 is the Radical SAM core domain; it reads AFARKFYYLR…AQVFHHSDYQ (234 aa). Arg-16 serves as a coordination point for GTP. Residues Cys-23 and Cys-27 each coordinate [4Fe-4S] cluster. Tyr-29 is an S-adenosyl-L-methionine binding site. Cys-30 serves as a coordination point for [4Fe-4S] cluster. Position 65 (Arg-65) interacts with GTP. Gly-69 lines the S-adenosyl-L-methionine pocket. Thr-96 contacts GTP. Residue Ser-120 participates in S-adenosyl-L-methionine binding. Position 157 (Lys-157) interacts with GTP. Met-191 provides a ligand contact to S-adenosyl-L-methionine. 2 residues coordinate [4Fe-4S] cluster: Cys-254 and Cys-257. Residue 259–261 participates in GTP binding; the sequence is RLR. Cys-271 is a [4Fe-4S] cluster binding site.

Belongs to the radical SAM superfamily. MoaA family. As to quaternary structure, monomer and homodimer. It depends on [4Fe-4S] cluster as a cofactor.

It catalyses the reaction GTP + AH2 + S-adenosyl-L-methionine = (8S)-3',8-cyclo-7,8-dihydroguanosine 5'-triphosphate + 5'-deoxyadenosine + L-methionine + A + H(+). It functions in the pathway cofactor biosynthesis; molybdopterin biosynthesis. Catalyzes the cyclization of GTP to (8S)-3',8-cyclo-7,8-dihydroguanosine 5'-triphosphate. This chain is GTP 3',8-cyclase, found in Yersinia pestis.